A 122-amino-acid chain; its full sequence is MPLKIRLSRGGAKKRPFYRVVVADSRMPRDGRFIERLGVFDPLKAKDSAERVVLDAEKAKEWIAKGAQPTDRVARLLDGLGVLTREAQSNPKKALPKKKAQERAAASAAAAEKAAAAAAPEA.

The segment at 87–122 (AQSNPKKALPKKKAQERAAASAAAAEKAAAAAAPEA) is disordered. Positions 103-122 (RAAASAAAAEKAAAAAAPEA) are enriched in low complexity.

This sequence belongs to the bacterial ribosomal protein bS16 family.

The protein is Small ribosomal subunit protein bS16 of Methylocella silvestris (strain DSM 15510 / CIP 108128 / LMG 27833 / NCIMB 13906 / BL2).